Consider the following 345-residue polypeptide: N-acetyl-gamma-glutamyl-phosphate reductase (345 aa).

Cys149 is a catalytic residue.

The protein belongs to the NAGSA dehydrogenase family. Type 1 subfamily.

The protein localises to the cytoplasm. The catalysed reaction is N-acetyl-L-glutamate 5-semialdehyde + phosphate + NADP(+) = N-acetyl-L-glutamyl 5-phosphate + NADPH + H(+). Its pathway is amino-acid biosynthesis; L-arginine biosynthesis; N(2)-acetyl-L-ornithine from L-glutamate: step 3/4. In terms of biological role, catalyzes the NADPH-dependent reduction of N-acetyl-5-glutamyl phosphate to yield N-acetyl-L-glutamate 5-semialdehyde. The protein is N-acetyl-gamma-glutamyl-phosphate reductase of Geobacillus sp. (strain WCH70).